Here is a 315-residue protein sequence, read N- to C-terminus: Small ribosomal subunit protein uS2 (315 aa).

The tract at residues 241 to 315 (AQHGEERRPG…QPAPGSDANR (75 aa)) is disordered. Residues 243 to 288 (HGEERRPGEEDRDAASERGQKDRRDRRDRRGGGRDRERREPREDRA) are compositionally biased toward basic and acidic residues.

This sequence belongs to the universal ribosomal protein uS2 family.

This is Small ribosomal subunit protein uS2 from Anaeromyxobacter sp. (strain Fw109-5).